A 492-amino-acid chain; its full sequence is N-succinylglutamate 5-semialdehyde dehydrogenase (492 aa).

220 to 225 serves as a coordination point for NAD(+); the sequence is GSANTG. Residues Glu-243 and Cys-277 contribute to the active site.

This sequence belongs to the aldehyde dehydrogenase family. AstD subfamily.

The enzyme catalyses N-succinyl-L-glutamate 5-semialdehyde + NAD(+) + H2O = N-succinyl-L-glutamate + NADH + 2 H(+). It participates in amino-acid degradation; L-arginine degradation via AST pathway; L-glutamate and succinate from L-arginine: step 4/5. Functionally, catalyzes the NAD-dependent reduction of succinylglutamate semialdehyde into succinylglutamate. The protein is N-succinylglutamate 5-semialdehyde dehydrogenase of Escherichia coli (strain ATCC 8739 / DSM 1576 / NBRC 3972 / NCIMB 8545 / WDCM 00012 / Crooks).